Reading from the N-terminus, the 206-residue chain is Cytochrome c biogenesis ATP-binding export protein CcmA (206 aa).

The 205-residue stretch at 2–206 folds into the ABC transporter domain; sequence LEARDVVCIR…IQLTPSEGTP (205 aa). Position 34-41 (34-41) interacts with ATP; that stretch reads GANGVGKT.

The protein belongs to the ABC transporter superfamily. CcmA exporter (TC 3.A.1.107) family. As to quaternary structure, the complex is composed of two ATP-binding proteins (CcmA) and two transmembrane proteins (CcmB).

It is found in the cell inner membrane. It carries out the reaction heme b(in) + ATP + H2O = heme b(out) + ADP + phosphate + H(+). Its function is as follows. Part of the ABC transporter complex CcmAB involved in the biogenesis of c-type cytochromes; once thought to export heme, this seems not to be the case, but its exact role is uncertain. Responsible for energy coupling to the transport system. This Pectobacterium atrosepticum (strain SCRI 1043 / ATCC BAA-672) (Erwinia carotovora subsp. atroseptica) protein is Cytochrome c biogenesis ATP-binding export protein CcmA.